The chain runs to 243 residues: Ribosomal RNA small subunit methyltransferase G (243 aa).

S-adenosyl-L-methionine-binding positions include Gly79, Phe84, 130–131, and Arg150; that span reads AE. A disordered region spans residues 219 to 243; the sequence is EKKKQTPNKYPRKPGTPGKDPIGKK.

It belongs to the methyltransferase superfamily. RNA methyltransferase RsmG family.

It localises to the cytoplasm. Functionally, specifically methylates the N7 position of a guanine in 16S rRNA. In Pediococcus pentosaceus (strain ATCC 25745 / CCUG 21536 / LMG 10740 / 183-1w), this protein is Ribosomal RNA small subunit methyltransferase G.